The chain runs to 293 residues: Small ribosomal subunit protein uS3 (293 aa).

The region spanning 39 to 110 (IRREIMKFLK…KISIKIKEVK (72 aa)) is the KH type-2 domain.

The protein belongs to the universal ribosomal protein uS3 family. As to quaternary structure, part of the 30S ribosomal subunit. Forms a tight complex with proteins S10 and S14.

Functionally, binds the lower part of the 30S subunit head. Binds mRNA in the 70S ribosome, positioning it for translation. This chain is Small ribosomal subunit protein uS3, found in Borreliella burgdorferi (strain ATCC 35210 / DSM 4680 / CIP 102532 / B31) (Borrelia burgdorferi).